The chain runs to 275 residues: MSQSPQSIIEQAWENRANLSPESAPADIRSAVNAVLEGLNAGTIRVAERRDVGKWEVNQWVKKAVLLSFRLEDNKPMGAGGYTQFYDKVPSKFENYTAADFAAGGFRVVPPAVARRGSFIGKNAVLMPSYVNIGAYVGEGTMVDTWATVGSCAQIGKNVHLSGGVGIGGVLEPIQAGPVIIEDNCFIGARSEVVEGVVIEENAVLSMGVYIGQSTKIYDRETGEVHYGRVPAGSVVVPGSLPSACGKYSLYAAIIVKKVDAQTRAKTAINELLRD.

R107 and D144 together coordinate substrate.

This sequence belongs to the transferase hexapeptide repeat family. Homotrimer.

The protein localises to the cytoplasm. The catalysed reaction is (S)-2,3,4,5-tetrahydrodipicolinate + succinyl-CoA + H2O = (S)-2-succinylamino-6-oxoheptanedioate + CoA. The protein operates within amino-acid biosynthesis; L-lysine biosynthesis via DAP pathway; LL-2,6-diaminopimelate from (S)-tetrahydrodipicolinate (succinylase route): step 1/3. In Polynucleobacter asymbioticus (strain DSM 18221 / CIP 109841 / QLW-P1DMWA-1) (Polynucleobacter necessarius subsp. asymbioticus), this protein is 2,3,4,5-tetrahydropyridine-2,6-dicarboxylate N-succinyltransferase.